A 446-amino-acid chain; its full sequence is Citrate/sodium symporter (446 aa).

A run of 5 helical transmembrane segments spans residues 23 to 43 (IFGM…LSHF), 46 to 66 (AIPT…AIFG), 79 to 99 (IGGA…AGIF), 110 to 130 (VMDK…GAIL), and 148 to 168 (ILAG…CFGI). Isoleucine 181 and glycine 183 together coordinate Na(+). Citrate contacts are provided by asparagine 186 and glycine 187. The next 5 membrane-spanning stretches (helical) occupy residues 213–233 (IAIL…LDMI), 267–287 (ETAV…VVAK), 289–309 (ILPS…LIVA), 335–355 (QLLW…QEII), and 364–384 (VIAA…GWLI). Na(+) is bound by residues methionine 399 and asparagine 401. Citrate is bound by residues arginine 402, glycine 404, serine 405, and arginine 428. Residues 425 to 445 (ISSRLGGGIVLVIASIVFSMM) form a helical membrane-spanning segment.

The protein belongs to the 2-hydroxycarboxylate transporter (2-HCT) (TC 2.A.24) family. As to quaternary structure, homodimer.

It localises to the cell inner membrane. The catalysed reaction is citrate(out) + 2 Na(+)(out) = citrate(in) + 2 Na(+)(in). Secondary active transporter that catalyzes the uptake of citrate across the membrane with the concomitant uptake of sodium. Is specific for citrate. The sequence is that of Citrate/sodium symporter from Salmonella dublin.